Here is a 201-residue protein sequence, read N- to C-terminus: Large ribosomal subunit protein uL4 (201 aa).

Residues 43 to 71 form a disordered region; that stretch reads TRAQKTRSDVSGGGKKPWRQKGTGRARSG.

Belongs to the universal ribosomal protein uL4 family. In terms of assembly, part of the 50S ribosomal subunit.

One of the primary rRNA binding proteins, this protein initially binds near the 5'-end of the 23S rRNA. It is important during the early stages of 50S assembly. It makes multiple contacts with different domains of the 23S rRNA in the assembled 50S subunit and ribosome. Its function is as follows. Forms part of the polypeptide exit tunnel. This is Large ribosomal subunit protein uL4 from Psychromonas ingrahamii (strain DSM 17664 / CCUG 51855 / 37).